The primary structure comprises 226 residues: Exopolysaccharide production protein ExoY (226 aa).

A helical membrane pass occupies residues 34-54; that stretch reads VLIAILALIALSPLFLLVMGL.

The protein belongs to the bacterial sugar transferase family.

Its subcellular location is the cell membrane. It participates in glycan metabolism; exopolysaccharide biosynthesis. Needed for the addition of the first sugar (galactose) to the isoprenoid carrier. May function as a sugar transferase. The sequence is that of Exopolysaccharide production protein ExoY (exoY) from Sinorhizobium fredii (strain NBRC 101917 / NGR234).